Here is a 681-residue protein sequence, read N- to C-terminus: PTS system glucose-specific EIICBA component (681 aa).

The PTS EIIC type-1 domain occupies 3-414 (KKLFGQLQRI…LKYKTPGRED (412 aa)). Transmembrane regions (helical) follow at residues 16 to 36 (LMLP…GTAM), 73 to 93 (MIFA…AAIA), 126 to 146 (ILGI…GALA), 170 to 190 (FVPI…ALIW), 199 to 219 (AFST…FGFI), 273 to 293 (FMQG…LAIY), 303 to 323 (VVAG…ITEP), 328 to 348 (FLFV…LSFL), 355 to 375 (LHLG…GILP), and 383 to 403 (VIPV…FLIV). Residues 425–506 (TELPYAVLEA…QQIMNGQVVE (82 aa)) form the PTS EIIB type-1 domain. Cys-447 (phosphocysteine intermediate; for EIIB activity) is an active-site residue. Positions 551 to 655 (DQVFSEKMMG…SDITPIIVTQ (105 aa)) constitute a PTS EIIA type-1 domain. His-603 functions as the Tele-phosphohistidine intermediate; for EIIA activity in the catalytic mechanism.

It is found in the cell membrane. The enzyme catalyses N(pros)-phospho-L-histidyl-[protein] + D-glucose(out) = D-glucose 6-phosphate(in) + L-histidyl-[protein]. Functionally, the phosphoenolpyruvate-dependent sugar phosphotransferase system (sugar PTS), a major carbohydrate active transport system, catalyzes the phosphorylation of incoming sugar substrates concomitantly with their translocation across the cell membrane. This system is involved in glucose transport. The sequence is that of PTS system glucose-specific EIICBA component (ptsG) from Staphylococcus aureus (strain bovine RF122 / ET3-1).